Here is a 334-residue protein sequence, read N- to C-terminus: Ketol-acid reductoisomerase (NADP(+)) (334 aa).

The region spanning 1–181 (MTTVYYDQSV…GATRAGVLET (181 aa)) is the KARI N-terminal Rossmann domain. Residues 25-28 (YGSQ), R48, S52, and 82-85 (DEIQ) contribute to the NADP(+) site. H107 is a catalytic residue. Residue G133 coordinates NADP(+). The 146-residue stretch at 182–327 (SFKEETETDL…RELRDMMPFI (146 aa)) folds into the KARI C-terminal knotted domain. Residues D190, E194, E226, and E230 each contribute to the Mg(2+) site. S251 is a binding site for substrate.

Belongs to the ketol-acid reductoisomerase family. The cofactor is Mg(2+).

It catalyses the reaction (2R)-2,3-dihydroxy-3-methylbutanoate + NADP(+) = (2S)-2-acetolactate + NADPH + H(+). The enzyme catalyses (2R,3R)-2,3-dihydroxy-3-methylpentanoate + NADP(+) = (S)-2-ethyl-2-hydroxy-3-oxobutanoate + NADPH + H(+). It participates in amino-acid biosynthesis; L-isoleucine biosynthesis; L-isoleucine from 2-oxobutanoate: step 2/4. It functions in the pathway amino-acid biosynthesis; L-valine biosynthesis; L-valine from pyruvate: step 2/4. Involved in the biosynthesis of branched-chain amino acids (BCAA). Catalyzes an alkyl-migration followed by a ketol-acid reduction of (S)-2-acetolactate (S2AL) to yield (R)-2,3-dihydroxy-isovalerate. In the isomerase reaction, S2AL is rearranged via a Mg-dependent methyl migration to produce 3-hydroxy-3-methyl-2-ketobutyrate (HMKB). In the reductase reaction, this 2-ketoacid undergoes a metal-dependent reduction by NADPH to yield (R)-2,3-dihydroxy-isovalerate. This Staphylococcus saprophyticus subsp. saprophyticus (strain ATCC 15305 / DSM 20229 / NCIMB 8711 / NCTC 7292 / S-41) protein is Ketol-acid reductoisomerase (NADP(+)).